The primary structure comprises 123 residues: Fluoride-specific ion channel FluC (123 aa).

Helical transmembrane passes span 5-25, 35-55, 67-87, and 100-120; these read IIALLIIGGGLGALTRYYISG, IGTLIVNSLASFLLGYIYGLL, IFLGTGFCGGLSTFSTFSYET, and FANITTNILVTIFLVFLGFIL. The Na(+) site is built by G75 and S78.

It belongs to the fluoride channel Fluc/FEX (TC 1.A.43) family.

The protein resides in the cell membrane. It carries out the reaction fluoride(in) = fluoride(out). Its activity is regulated as follows. Na(+) is not transported, but it plays an essential structural role and its presence is essential for fluoride channel function. Its function is as follows. Fluoride-specific ion channel. Important for reducing fluoride concentration in the cell, thus reducing its toxicity. The sequence is that of Fluoride-specific ion channel FluC from Pyrococcus horikoshii (strain ATCC 700860 / DSM 12428 / JCM 9974 / NBRC 100139 / OT-3).